The primary structure comprises 381 residues: Subtilisin amylosacchariticus (381 aa).

Positions 1 to 29 (MRSKKLWISLLFALTLIFTMAFSNMSAQA) are cleaved as a signal peptide. Residues 30 to 106 (AGKSSTEKKY…VEEDHIAHEY (77 aa)) constitute a propeptide that is removed on maturation. Residues 38–103 (KYIVGFKQTM…VAYVEEDHIA (66 aa)) enclose the Inhibitor I9 domain. Gln-108 serves as a coordination point for Ca(2+). Positions 111–380 (PYGISQIKAP…KGLINVQAAA (270 aa)) constitute a Peptidase S8 domain. Asp-138 functions as the Charge relay system in the catalytic mechanism. A Ca(2+)-binding site is contributed by Asp-147. His-170 (charge relay system) is an active-site residue. Positions 181, 183, 185, 187, 275, 277, and 280 each coordinate Ca(2+). The active-site Charge relay system is Ser-327.

This sequence belongs to the peptidase S8 family. Requires Ca(2+) as cofactor.

It localises to the secreted. It catalyses the reaction Hydrolysis of proteins with broad specificity for peptide bonds, and a preference for a large uncharged residue in P1. Hydrolyzes peptide amides.. Subtilisin is an extracellular alkaline serine protease, it catalyzes the hydrolysis of proteins and peptide amides. This chain is Subtilisin amylosacchariticus (apr), found in Bacillus subtilis subsp. amylosacchariticus.